We begin with the raw amino-acid sequence, 531 residues long: Tubulin-folding cofactor E (531 aa).

Residues 32–76 (GDVEGYSGTWIGVDWDQDGDGKHNGSVNGVFYFNGRSQSSASFVR) form the CAP-Gly domain. 9 LRR repeats span residues 84 to 109 (ITLLQALELRYRTISTKDEEDEMYVL), 159 to 183 (LPNLKLLDLTGNLISDWEEIGALCE), 185 to 213 (LPALTTLNLSCNSLSSDIKSLPQLKNIRV), 233 to 256 (LPGIEELHLMGNMISTITSTSSSD), 260 to 284 (FNSLRLLNLDDNCISDWSEVLKLSQ), 285 to 308 (LPCLEQLYLNKNKLSRIFQSVNGT), 318 to 342 (FPSLSCLLLGANNIGDLASVDALNG), 344 to 366 (PQLVDIRLSENPISDPVRGGVPR), and 474 to 497 (VGKLKILSENFFKLKSIKPRLFLQ).

It belongs to the TBCE family. As to quaternary structure, supercomplex made of cofactors A to E. Cofactors A and D function by capturing and stabilizing tubulin in a quasi-native conformation. Cofactor E binds to the cofactor D-tubulin complex; interaction with cofactor C then causes the release of tubulin polypeptides that are committed to the native state.

Its subcellular location is the cytoplasm. In terms of biological role, essential tubulin-folding protein involved in the tubulin folding pathway. Not essential for cell viability. Probably involved in the binding of alpha-tubulin in the multimeric supercomplex. The protein is Tubulin-folding cofactor E (TFCE) of Arabidopsis thaliana (Mouse-ear cress).